Consider the following 799-residue polypeptide: MKLTDADNAADGIFFPALEQNMMGAVLINENDEVMFFNPAAEKLWGYKREEVIGNNIDMLIPRDLRPAHPEYIRHNREGGKARVEGMSRELQLEKKDGSKIWTRFALSKVSAEGKVYYLALVRDASVEMAQKEQTRQLIIAVDHLDRPVIVLDPERHIVQCNRAFTEMFGYCISEASGMQPDTLLNIPEFPADNRIRLQQLLWKTARDQDEFLLLTRTGEKIWIKASISPVYDVLAHLQNLVMTFSDITEERQIRQLEGNILAAMCSSPPFHEMGEIICRNIESVLNESHVSLFALRNGMPIHWASSSHGAEIQNAQSWSATIRQRDGAPAGILQIKTSSGAETSAFIERVADISQHMAALALEQEKSRQHIEQLIQFDPMTGLPNRNNLHNYLDDLVDKAVSPVVYLIGVDHIQDVIDSLGYAWADQALLEVVNRFREKLKPDQYLCRIEGTQFVLVSLENDVSNITQIADELRNVVSKPIMIDDKPFPLTLSIGISYDLGKNRDYLLSTAHNAMDYIRKNGGNGWQFFSPAMNEMVKERLVLGAALKEAISNNQLKLVYQPQIFAETGELYGIEALARWHDPLHGHVPPSRFIPLAEEIGEIENIGRWVIAEACRQLAEWRSQNIHIPALSVNLSALHFRSNQLPNQVSDAMHAWGIDGHQLTVEITESMMMEHDTEIFKRIQILRDMGVGLSVDDFGTGFSGLSRLVSLPVTEIKIDKSFVDRCLTEKRILALLEAITSIGQSLNLTVVAEGVETKEQFEMLRKIHCRVIQGYFFSRPLPAEEIPGWMSSVLPLKI.

The region spanning 10-81 (ADGIFFPALE…YIRHNREGGK (72 aa)) is the PAS 1 domain. Heme is bound by residues H69 and M87. Positions 134–207 (QTRQLIIAVD…LQQLLWKTAR (74 aa)) constitute a PAS 2 domain. Residues 208–260 (DQDEFLLLTRTGEKIWIKASISPVYDVLAHLQNLVMTFSDITEERQIRQLEGN) form the PAC domain. One can recognise a GGDEF domain in the interval 402 to 532 (VSPVVYLIGV…GGNGWQFFSP (131 aa)). One can recognise an EAL domain in the interval 541–795 (RLVLGAALKE…EIPGWMSSVL (255 aa)).

Homodimer; has been previously suggested to be a homotetramer based on size exclusion chromatography. Forms a complex with DosC. Requires heme as cofactor. It depends on Mg(2+) as a cofactor. Post-translationally, the heme distal ligand is coordinated by Met-87 in the active Fe(2+) (ferrous) form, by O(2) in the O(2)-bound form and by H(2)O in the inactive Fe(3+) (ferric) form.

The enzyme catalyses 3',3'-c-di-GMP + H2O = 5'-phosphoguanylyl(3'-&gt;5')guanosine + H(+). Its activity is regulated as follows. Has c-di-GMP PDE activity in both Fe(2+) and Fe(3+)-bound forms; this activity is increased 6-7 fold by binding of O(2) and CO and NO. Has cAMP PDE activity only when the heme is in the Fe(2+) form. cAMP PDE activity is inhibited by oxidation of the heme iron and by binding of external ligands such as CO and NO. Also strongly inhibited by etazolate hydrochloride, a selective cAMP PDE inhibitor. PDE activity is inhibited in the absence of oxygen. Its function is as follows. Heme-based oxygen sensor protein displaying phosphodiesterase (PDE) activity toward c-di-GMP in response to oxygen availability. Involved in the modulation of intracellular c-di-GMP levels, in association with DosC which catalyzes the biosynthesis of c-di-GMP (diguanylate cyclase activity). Cyclic-di-GMP is a second messenger which controls cell surface-associated traits in bacteria. Has very poor PDE activity on cAMP but is not active with cGMP, bis(p-nitrophenyl) phosphate or p-nitrophenyl phosphate. Via its PDE activity on c-di-GMP, DosP regulates biofilm formation through the repression of transcription of the csgBAC operon, which encodes curli structural subunits. This chain is Oxygen sensor protein DosP (dosP), found in Escherichia coli (strain K12).